Consider the following 475-residue polypeptide: Probable 5'-adenylylsulfate reductase 1, chloroplastic (475 aa).

The transit peptide at 1–63 directs the protein to the chloroplast; that stretch reads MASATASISS…AAEPARQPVS (63 aa). Positions 72 to 327 are reductase domain; it reads AAPVAEDAAA…KAKECGLHKG (256 aa). The Thioredoxin domain occupies 341 to 475; it reads HKAGGANGNG…SLLAFVNSLR (135 aa). Active-site nucleophile residues include cysteine 393 and cysteine 396. The cysteines at positions 393 and 396 are disulfide-linked.

This sequence belongs to the APS reductase family. [4Fe-4S] cluster serves as cofactor.

It is found in the plastid. The protein resides in the chloroplast. It carries out the reaction glutathione disulfide + sulfite + AMP + 2 H(+) = adenosine 5'-phosphosulfate + 2 glutathione. Functionally, reduces sulfate for Cys biosynthesis. The polypeptide is Probable 5'-adenylylsulfate reductase 1, chloroplastic (APR1) (Oryza sativa subsp. japonica (Rice)).